A 355-amino-acid chain; its full sequence is MKKIKVLIVDDSAVVRQTMADILASDPHIEVMAPAADPFIAAERMREQVPDVITLDVEMPRMDGITFLKKIMSQHPIPVVMCSTLTESGSETAVKALEYGAVEIIQKPKLGTKQFLEESRVRICDAVKAASQARLRKITPRTGKEIAPKLSADVILEKPGSKAMIQTTEKVVVVGASTGGTEALRVFLEALPADSPPIVIVQHMPEGFTRAFAQRLDGICRITVKEAADNDTVMRGRALIAPGNRHTLLKRSGARYYVEIKDGPLVSRHRPSVDVLFRSAARYAGKNAVGVIMTGMGDDGASGMKEMRDAGAVTIAQDEATCIVFGMPNEAIKRGGADRVIPLDTIAREVLRLCG.

A Response regulatory domain is found at 5 to 122 (KVLIVDDSAV…KQFLEESRVR (118 aa)). 4-aspartylphosphate is present on Asp56. A CheB-type methylesterase domain is found at 165–355 (IQTTEKVVVV…IAREVLRLCG (191 aa)). Active-site residues include Ser177, His203, and Asp299.

The protein belongs to the CheB family. In terms of processing, phosphorylated by CheA. Phosphorylation of the N-terminal regulatory domain activates the methylesterase activity.

It is found in the cytoplasm. It carries out the reaction [protein]-L-glutamate 5-O-methyl ester + H2O = L-glutamyl-[protein] + methanol + H(+). The catalysed reaction is L-glutaminyl-[protein] + H2O = L-glutamyl-[protein] + NH4(+). Functionally, involved in chemotaxis. Part of a chemotaxis signal transduction system that modulates chemotaxis in response to various stimuli. Catalyzes the demethylation of specific methylglutamate residues introduced into the chemoreceptors (methyl-accepting chemotaxis proteins or MCP) by CheR. Also mediates the irreversible deamidation of specific glutamine residues to glutamic acid. The protein is Protein-glutamate methylesterase/protein-glutamine glutaminase 3 of Geobacter metallireducens (strain ATCC 53774 / DSM 7210 / GS-15).